A 367-amino-acid polypeptide reads, in one-letter code: NADH-quinone oxidoreductase subunit D (367 aa).

This sequence belongs to the complex I 49 kDa subunit family. In terms of assembly, NDH-1 is composed of 14 different subunits. Subunits NuoB, C, D, E, F, and G constitute the peripheral sector of the complex.

Its subcellular location is the cell membrane. It carries out the reaction a quinone + NADH + 5 H(+)(in) = a quinol + NAD(+) + 4 H(+)(out). In terms of biological role, NDH-1 shuttles electrons from NADH, via FMN and iron-sulfur (Fe-S) centers, to quinones in the respiratory chain. The immediate electron acceptor for the enzyme in this species is believed to be ubiquinone. Couples the redox reaction to proton translocation (for every two electrons transferred, four hydrogen ions are translocated across the cytoplasmic membrane), and thus conserves the redox energy in a proton gradient. This is NADH-quinone oxidoreductase subunit D from Dehalococcoides mccartyi (strain CBDB1).